The chain runs to 387 residues: 3-ketoacyl-CoA thiolase (387 aa).

The active-site Acyl-thioester intermediate is Cys-91. Catalysis depends on proton acceptor residues His-343 and Cys-373.

Belongs to the thiolase-like superfamily. Thiolase family. Heterotetramer of two alpha chains (FadB) and two beta chains (FadA).

Its subcellular location is the cytoplasm. It catalyses the reaction an acyl-CoA + acetyl-CoA = a 3-oxoacyl-CoA + CoA. The protein operates within lipid metabolism; fatty acid beta-oxidation. In terms of biological role, catalyzes the final step of fatty acid oxidation in which acetyl-CoA is released and the CoA ester of a fatty acid two carbons shorter is formed. The chain is 3-ketoacyl-CoA thiolase from Shigella boydii serotype 4 (strain Sb227).